We begin with the raw amino-acid sequence, 564 residues long: Ell-associated factor Eaf (564 aa).

Disordered regions lie at residues 179–255 and 270–564; these read SGPG…MITD and QANI…DDDD. The segment covering 186–205 has biased composition (polar residues); sequence ENSTMRVSSKTKVSTGSRRN. Ser215 is modified (phosphoserine). Over residues 274–283 the composition is skewed to low complexity; that stretch reads SGSSTGSSSG. Positions 297–309 are enriched in basic residues; it reads GKQRQAHGKRQQI. Low complexity-rich tracts occupy residues 315-329, 343-387, and 409-420; these read PPVQ…QQQP, QQQQ…QQRP, and ASQSVAQAAAVL. Acidic residues predominate over residues 438–453; that stretch reads DSSDSDSGSDSDDSTE. 3 stretches are compositionally biased toward low complexity: residues 463-505, 523-533, and 546-564; these read EQQQ…NQLP, QQPQPQPQQQQ, and NDLL…DDDD.

It belongs to the EAF family.

The protein resides in the nucleus. In terms of biological role, promotes transcriptional elongation by Su(Tpl)/ELL. Essential for development. The protein is Ell-associated factor Eaf of Drosophila pseudoobscura pseudoobscura (Fruit fly).